Consider the following 239-residue polypeptide: Fatty acid metabolism regulator protein (239 aa).

Positions Gln6–Phe74 constitute an HTH gntR-type domain. The segment at residues Glu34 to Gln53 is a DNA-binding region (H-T-H motif).

In terms of assembly, homodimer.

It is found in the cytoplasm. Its function is as follows. Multifunctional regulator of fatty acid metabolism. In Proteus mirabilis (strain HI4320), this protein is Fatty acid metabolism regulator protein.